Reading from the N-terminus, the 669-residue chain is Armadillo repeat-containing protein gudu (669 aa).

The span at 1-10 (MIGTSSGTSH) shows a compositional bias: polar residues. Positions 1–53 (MIGTSSGTSHNRSRKKKEQCGSCPNRFSKDKRQVAAEDSDTTEVESSTDEEER) are disordered. Over residues 37-51 (EDSDTTEVESSTDEE) the composition is skewed to acidic residues. 10 ARM repeats span residues 100 to 139 (QINQ…DITL), 141 to 180 (IDIR…NVCK), 240 to 279 (KHNM…KCSS), 281 to 320 (PKFQ…KCAF), 322 to 365 (GTTR…MCAV), 367 to 406 (DANV…ECVR), 408 to 447 (QSNR…ECAE), 492 to 531 (DSAE…TIAQ), 574 to 613 (GNNT…KLSM), and 615 to 654 (PQNC…NIRE).

In terms of tissue distribution, highly expressed in testis.

Its function is as follows. Important for spermatogenesis where it may have a role in sperm individualization. The polypeptide is Armadillo repeat-containing protein gudu (Drosophila melanogaster (Fruit fly)).